The following is an 83-amino-acid chain: Apolipoprotein C-I, acidic form (83 aa).

The signal sequence occupies residues 1–26 (MRLFLSLPVLVVVLSMVLEGPAPAQG).

This sequence belongs to the apolipoprotein C1 family.

The protein resides in the secreted. Its function is as follows. Inhibitor of lipoprotein binding to the low density lipoprotein (LDL) receptor, LDL receptor-related protein, and very low density lipoprotein (VLDL) receptor. Associates with high density lipoproteins (HDL) and the triacylglycerol-rich lipoproteins in the plasma and makes up about 10% of the protein of the VLDL and 2% of that of HDL. Appears to interfere directly with fatty acid uptake and is also the major plasma inhibitor of cholesteryl ester transfer protein (CETP). Binds free fatty acids and reduces their intracellular esterification. Modulates the interaction of APOE with beta-migrating VLDL and inhibits binding of beta-VLDL to the LDL receptor-related protein. The sequence is that of Apolipoprotein C-I, acidic form (APOC1A) from Pongo abelii (Sumatran orangutan).